The following is a 418-amino-acid chain: ATP phosphoribosyltransferase regulatory subunit (418 aa).

Belongs to the class-II aminoacyl-tRNA synthetase family. HisZ subfamily. In terms of assembly, heteromultimer composed of HisG and HisZ subunits.

The protein resides in the cytoplasm. The protein operates within amino-acid biosynthesis; L-histidine biosynthesis; L-histidine from 5-phospho-alpha-D-ribose 1-diphosphate: step 1/9. Functionally, required for the first step of histidine biosynthesis. May allow the feedback regulation of ATP phosphoribosyltransferase activity by histidine. The polypeptide is ATP phosphoribosyltransferase regulatory subunit (Acetivibrio thermocellus (strain ATCC 27405 / DSM 1237 / JCM 9322 / NBRC 103400 / NCIMB 10682 / NRRL B-4536 / VPI 7372) (Clostridium thermocellum)).